Here is a 420-residue protein sequence, read N- to C-terminus: D-tagatose-1,6-bisphosphate aldolase subunit GatZ (420 aa).

The protein belongs to the GatZ/KbaZ family. GatZ subfamily. As to quaternary structure, forms a complex with GatY.

It participates in carbohydrate metabolism; D-tagatose 6-phosphate degradation; D-glyceraldehyde 3-phosphate and glycerone phosphate from D-tagatose 6-phosphate: step 2/2. Functionally, component of the tagatose-1,6-bisphosphate aldolase GatYZ that is required for full activity and stability of the Y subunit. Could have a chaperone-like function for the proper and stable folding of GatY. When expressed alone, GatZ does not show any aldolase activity. Is involved in the catabolism of galactitol. The sequence is that of D-tagatose-1,6-bisphosphate aldolase subunit GatZ from Escherichia coli O6:H1 (strain CFT073 / ATCC 700928 / UPEC).